The following is a 128-amino-acid chain: Ribonuclease P protein component (128 aa).

This sequence belongs to the RnpA family. As to quaternary structure, consists of a catalytic RNA component (M1 or rnpB) and a protein subunit.

The enzyme catalyses Endonucleolytic cleavage of RNA, removing 5'-extranucleotides from tRNA precursor.. RNaseP catalyzes the removal of the 5'-leader sequence from pre-tRNA to produce the mature 5'-terminus. It can also cleave other RNA substrates such as 4.5S RNA. The protein component plays an auxiliary but essential role in vivo by binding to the 5'-leader sequence and broadening the substrate specificity of the ribozyme. This Prochlorococcus marinus (strain MIT 9312) protein is Ribonuclease P protein component.